The primary structure comprises 1178 residues: Zinc finger CCHC domain-containing protein 2 (1178 aa).

Disordered stretches follow at residues 1–90 (MLRM…GPSA), 207–249 (AARG…RVGG), 557–683 (VTSA…SVNQ), and 936–986 (LSTA…SDST). Residues 43–67 (PPPPPPPPAGPSRGPLPPPPPPRGL) show a composition bias toward pro residues. Residues 75–88 (AAAGAGMPGGGGGP) are compositionally biased toward gly residues. Positions 208 to 219 (ARGEGSRGGAED) are enriched in basic and acidic residues. The span at 220 to 229 (ERGEDGDGEQ) shows a compositional bias: acidic residues. A Phosphoserine modification is found at serine 236. Residues 580–594 (PQTEKEKIKKTDNRL) are compositionally biased toward basic and acidic residues. Residues 595-607 (NSRINGIRLSTPQ) are compositionally biased toward polar residues. The segment covering 632 to 641 (SSESYSSPSS) has biased composition (low complexity). The segment covering 642–661 (PRHDGRESFESEEEKDRDTD) has biased composition (basic and acidic residues). Polar residues predominate over residues 665–683 (EDSGNPSTTRFTGYGSVNQ). Over residues 937 to 948 (STAATSPQPASA) the composition is skewed to low complexity. Over residues 959–973 (PAVPTHTPGPAPSPS) the composition is skewed to pro residues. A compositionally biased stretch (polar residues) spans 974–986 (PALTHSTAQSDST). The segment at 1131 to 1148 (VSCYNCGVSGHYAQDCKQ) adopts a CCHC-type zinc-finger fold.

The protein is Zinc finger CCHC domain-containing protein 2 of Homo sapiens (Human).